Reading from the N-terminus, the 316-residue chain is L-lactate dehydrogenase (316 aa).

34–39 (DVVEGV) lines the NAD(+) pocket. Substrate contacts are provided by Arg-89, Asn-121, and Arg-152. Asn-121 serves as a coordination point for NAD(+). His-172 serves as the catalytic Proton acceptor.

This sequence belongs to the LDH/MDH superfamily. LDH family. Homotetramer.

It catalyses the reaction (S)-lactate + NAD(+) = pyruvate + NADH + H(+). Its pathway is fermentation; pyruvate fermentation to lactate; (S)-lactate from pyruvate: step 1/1. The protein is L-lactate dehydrogenase of Botryococcus braunii (Green alga).